We begin with the raw amino-acid sequence, 237 residues long: MGGHSFTFKQFHIDQDRCAMKVGTDSIVLGSWTPVRGAKRILDIGTGTGILALMLAQRTAQQVQIDAVELDKDAVKQAEENINASPWRERIRVIRHDIRTFQAPHYDLIISNPPYFVHGQTLPDAARQLARHTGELDQTALLESAARLLTPFGKLALVLPVEEGEQLVALATAGGWYLQRRCRVETKRGKAPNLVLLLLSRKPAETEEEQLCLRETDNRYSPEFIALADEFYLRMSA.

This sequence belongs to the methyltransferase superfamily. tRNA (adenine-N(6)-)-methyltransferase family.

It is found in the cytoplasm. The enzyme catalyses adenosine(37) in tRNA1(Val) + S-adenosyl-L-methionine = N(6)-methyladenosine(37) in tRNA1(Val) + S-adenosyl-L-homocysteine + H(+). Its function is as follows. Specifically methylates the adenine in position 37 of tRNA(1)(Val) (anticodon cmo5UAC). This chain is tRNA1(Val) (adenine(37)-N6)-methyltransferase, found in Tolumonas auensis (strain DSM 9187 / NBRC 110442 / TA 4).